Here is a 286-residue protein sequence, read N- to C-terminus: Undecaprenyl-diphosphatase (286 aa).

Helical transmembrane passes span 17 to 37, 49 to 69, 98 to 118, 126 to 146, 159 to 179, 204 to 224, 232 to 252, and 261 to 281; these read VVLG…TAHL, PGVA…IGYF, IAIA…KLFW, LRSV…LALA, VQGL…IPGV, FLLG…GAFA, LPML…IAWL, and TWPF…LVLA.

Belongs to the UppP family.

The protein localises to the cell inner membrane. The catalysed reaction is di-trans,octa-cis-undecaprenyl diphosphate + H2O = di-trans,octa-cis-undecaprenyl phosphate + phosphate + H(+). Catalyzes the dephosphorylation of undecaprenyl diphosphate (UPP). Confers resistance to bacitracin. This Synechococcus sp. (strain RCC307) protein is Undecaprenyl-diphosphatase.